The primary structure comprises 210 residues: Thymidylate kinase (210 aa).

Position 10–17 (10–17 (GPEGAGKS)) interacts with ATP.

This sequence belongs to the thymidylate kinase family.

The catalysed reaction is dTMP + ATP = dTDP + ADP. Functionally, phosphorylation of dTMP to form dTDP in both de novo and salvage pathways of dTTP synthesis. The chain is Thymidylate kinase from Pseudomonas savastanoi pv. phaseolicola (strain 1448A / Race 6) (Pseudomonas syringae pv. phaseolicola (strain 1448A / Race 6)).